We begin with the raw amino-acid sequence, 41 residues long: MKILSSLKTAKHRHPDCRIVRRRGRLYVICKSDPRFKARQR.

Belongs to the bacterial ribosomal protein bL36 family.

The protein is Large ribosomal subunit protein bL36 of Edwardsiella ictaluri (strain 93-146).